A 255-amino-acid polypeptide reads, in one-letter code: Cytochrome c oxidase subunit 3 (255 aa).

7 helical membrane passes run 12 to 29 (INII…STGL), 57 to 77 (LKYL…INGI), 91 to 111 (IFGM…WGFF), 126 to 146 (LEAF…ISLI), 155 to 175 (YFEV…FLSF), 196 to 216 (FNVL…FALM), and 235 to 255 (GMYW…LFLL).

It belongs to the cytochrome c oxidase subunit 3 family. In terms of assembly, component of the cytochrome c oxidase (complex IV, CIV), a multisubunit enzyme composed of a catalytic core of 3 subunits and several supernumerary subunits. The complex exists as a monomer or a dimer and forms supercomplexes (SCs) in the inner mitochondrial membrane with ubiquinol-cytochrome c oxidoreductase (cytochrome b-c1 complex, complex III, CIII).

Its subcellular location is the mitochondrion inner membrane. It carries out the reaction 4 Fe(II)-[cytochrome c] + O2 + 8 H(+)(in) = 4 Fe(III)-[cytochrome c] + 2 H2O + 4 H(+)(out). Component of the cytochrome c oxidase, the last enzyme in the mitochondrial electron transport chain which drives oxidative phosphorylation. The respiratory chain contains 3 multisubunit complexes succinate dehydrogenase (complex II, CII), ubiquinol-cytochrome c oxidoreductase (cytochrome b-c1 complex, complex III, CIII) and cytochrome c oxidase (complex IV, CIV), that cooperate to transfer electrons derived from NADH and succinate to molecular oxygen, creating an electrochemical gradient over the inner membrane that drives transmembrane transport and the ATP synthase. Cytochrome c oxidase is the component of the respiratory chain that catalyzes the reduction of oxygen to water. Electrons originating from reduced cytochrome c in the intermembrane space (IMS) are transferred via the dinuclear copper A center (CU(A)) of subunit 2 and heme A of subunit 1 to the active site in subunit 1, a binuclear center (BNC) formed by heme A3 and copper B (CU(B)). The BNC reduces molecular oxygen to 2 water molecules using 4 electrons from cytochrome c in the IMS and 4 protons from the mitochondrial matrix. This Theileria annulata protein is Cytochrome c oxidase subunit 3 (MT-CO3).